The sequence spans 267 residues: Small ribosomal subunit protein mS23 (267 aa).

The disordered stretch occupies residues 230-267 (VKTASKDGKSSNGSMGAEDVVEKTTSAWETEFVEEESS).

Belongs to the mitochondrion-specific ribosomal protein mS23 family. In terms of assembly, component of the mitochondrial small ribosomal subunit.

Its subcellular location is the mitochondrion. The polypeptide is Small ribosomal subunit protein mS23 (RSM25) (Meyerozyma guilliermondii (strain ATCC 6260 / CBS 566 / DSM 6381 / JCM 1539 / NBRC 10279 / NRRL Y-324) (Yeast)).